The following is a 186-amino-acid chain: uncharacterized protein (186 aa).

This is an uncharacterized protein from Saccharomyces cerevisiae (strain ATCC 204508 / S288c) (Baker's yeast).